Reading from the N-terminus, the 676-residue chain is Forkhead box protein biniou (676 aa).

5 disordered regions span residues tyrosine 22–tyrosine 50, alanine 131–threonine 160, glutamine 203–serine 232, asparagine 249–proline 312, and isoleucine 583–proline 651. Over residues proline 34–histidine 48 the composition is skewed to basic residues. A compositionally biased stretch (polar residues) spans serine 133 to threonine 160. Residues glutamine 203–glutamine 220 show a composition bias toward low complexity. Polar residues predominate over residues proline 257–histidine 273. The segment at residues lysine 311–arginine 408 is a DNA-binding region (fork-head). The segment covering isoleucine 583–glutamine 593 has biased composition (low complexity). Basic residues predominate over residues alanine 594 to glutamine 611. Residues glycine 612–threonine 625 show a composition bias toward low complexity. The span at glycine 637–proline 647 shows a compositional bias: basic and acidic residues.

As to quaternary structure, binds to DNA. In embryo, expressed in all types of visceral muscles and their progenitors (at protein level). In late stage 10 embryo, expressed in the caudal visceral mesoderm and trunk and hindgut visceral mesoderm progenitors.

It localises to the nucleus. Component of a regulatory network controlling visceral mesoderm development and midgut morphogenesis. Transcriptional regulator involved in the activation of a large number of genes in the visceral mesoderm including betaTub60D, dpp and Hand. Binds to and regulates a number of enhancers driving expression in the visceral mesoderm in a temporally and spatially restricted manner. Also to binds to enhancers cooperatively with activators, such as bap or HLH54F, to coregulate expression of shared target genes in the visceral mesoderm. Binds to the Ndg enhancer and drives expression of Ndg in the late visceral musculature. May be involved in the transcriptional regulation of wupA in the visceral mesoderm. Plays an indirect role in the later stages of salivary gland positioning. In Drosophila melanogaster (Fruit fly), this protein is Forkhead box protein biniou (bin).